A 197-amino-acid chain; its full sequence is 3-isopropylmalate dehydratase small subunit (197 aa).

It belongs to the LeuD family. LeuD type 1 subfamily. Heterodimer of LeuC and LeuD.

The enzyme catalyses (2R,3S)-3-isopropylmalate = (2S)-2-isopropylmalate. Its pathway is amino-acid biosynthesis; L-leucine biosynthesis; L-leucine from 3-methyl-2-oxobutanoate: step 2/4. Catalyzes the isomerization between 2-isopropylmalate and 3-isopropylmalate, via the formation of 2-isopropylmaleate. The polypeptide is 3-isopropylmalate dehydratase small subunit (Corynebacterium glutamicum (strain R)).